The primary structure comprises 182 residues: Ribosome maturation factor RimM (182 aa).

Residues 103-182 (EDDYYWKDLM…RVEVDWDPGF (80 aa)) form the PRC barrel domain.

The protein belongs to the RimM family. Binds ribosomal protein uS19.

It is found in the cytoplasm. Functionally, an accessory protein needed during the final step in the assembly of 30S ribosomal subunit, possibly for assembly of the head region. Essential for efficient processing of 16S rRNA. May be needed both before and after RbfA during the maturation of 16S rRNA. It has affinity for free ribosomal 30S subunits but not for 70S ribosomes. In Yersinia enterocolitica serotype O:8 / biotype 1B (strain NCTC 13174 / 8081), this protein is Ribosome maturation factor RimM.